The following is a 468-amino-acid chain: Purple acid phosphatase 10 (468 aa).

An N-terminal signal peptide occupies residues 1 to 25 (MGRVRKSDFGSIVLVLCCVLNSLLC). N-linked (GlcNAc...) asparagine glycans are attached at residues N95 and N113. Fe cation is bound at residue D167. The N-linked (GlcNAc...) asparagine glycan is linked to N175. Fe cation is bound by residues D196 and Y199. D196 is a binding site for Zn(2+). N233 contributes to the Zn(2+) binding site. Residue N233 participates in substrate binding. Residue N306 is glycosylated (N-linked (GlcNAc...) asparagine). Residue H318 participates in Zn(2+) binding. The Proton donor role is filled by H328. Zn(2+) is bound at residue H355. 355 to 357 (HVH) is a substrate binding site. H357 is a Fe cation binding site. N-linked (GlcNAc...) asparagine glycosylation occurs at N428.

It belongs to the metallophosphoesterase superfamily. Purple acid phosphatase family. In terms of assembly, homodimer; disulfide-linked. The cofactor is Fe cation. Zn(2+) is required as a cofactor. Expressed in roots, stems, leaves, flowers and siliques.

The protein resides in the secreted. It localises to the cytoplasm. It carries out the reaction a phosphate monoester + H2O = an alcohol + phosphate. This is Purple acid phosphatase 10 (PAP10) from Arabidopsis thaliana (Mouse-ear cress).